The following is a 155-amino-acid chain: Endoribonuclease YbeY (155 aa).

His-110, His-114, and His-120 together coordinate Zn(2+).

It belongs to the endoribonuclease YbeY family. It depends on Zn(2+) as a cofactor.

The protein localises to the cytoplasm. Single strand-specific metallo-endoribonuclease involved in late-stage 70S ribosome quality control and in maturation of the 3' terminus of the 16S rRNA. The polypeptide is Endoribonuclease YbeY (Deinococcus radiodurans (strain ATCC 13939 / DSM 20539 / JCM 16871 / CCUG 27074 / LMG 4051 / NBRC 15346 / NCIMB 9279 / VKM B-1422 / R1)).